The chain runs to 1187 residues: MRLFFKFFYLSNEGFDNELCGNFKSPCKNIGYLFNNSRVDKNFNSTFYFSPGIYNLSSSIIIIDFQVGINLIGIGENKKIIITTHKGTRGVISYNSNLIIRGITFDNCKVKKNEFPLYVPETLTDYSDDKLDYLTLNYYIGTGGALQIVYSKVYISNCVFSNNKGRNGGAIFTVLSNITISDCIFYSNQALMRSEDGGNGGAIFFGLSTNAIILKSIFKNNMAITGGVIVQSNSELRVEDTVFAYNQASNGGVFLIFNDSKIESTRCSFYANYANISAIANIQNSFAFQKSCLYQENMASAMGGVFSLVDRTILFVTLSIFNDNYAPSSLIVENHGSGLAMFTNCEFTFSDNFKRQIIQSLFSISNYNFLLLKDSRVSNSKGNVIWCTSNAIIVVYNTTFYNVSSKVINIHSQGYFFSISTTFIECKAEDYLVVLRNGARGILFRNNFIDNNGILMVFTTYNSSMIIIESKFFNNIVRNELIAVRNEYTLQIYNSIFKNNIGKTRGCIISVDQLGKLTSTNNYFINNTSVYGTIINFVKKRFNYWHTDFQCFSTFKNDTIVNNTALVSGAIVYYRDKIIGTKYTCESCLFLNNIAHFGNNINSGFHSFSVIQASKVHSNEHFPALIYAFDQFDNLIRGKNDIRFHVSSCDDIHLTGVTSSTIQLNGVTALYNLKVNSPENHFCNLSYKSNPKKGDVKLPISILNCPQGEEMFDVSYQGKVFQCLKTIETSNIAKTVMIITTSILVLLILLCFGITIAYSKEKVINFGNIVFLILMLFSCLFLCIIIYVSIEPTNFSCQFSAIVFPIGIGILFTLTLLKQYKIYKLFKYSDFLKINTDNLKMVKYAGLIMVPVFLLVLIGVIVYPSKPTFILDLHTKTATKYCISRKYYVFSIVIVVYEVIILLTSCFIAMKSKRYHSTPGTFYESLFNSILIYNYTLVFIVLIPLFYTLQNNPTTIYLIYSIGSSILVFATLSIIFIPKINFLFRRKQIVSTLKKTIETQERDIQRNKDLLIFYKMFLIEKKNNNFNNNPIFNIHETFSSEDEDEDEEDDIGEGIYSLFNHWDQNKRKYNNNQIYPNQIPKQTTNSPSSQSIDFLNNPTIPKNKSINNLPNLFKKPKKKLKSKIISKSANSSPNINNNTINNNNNNNNNNNNNNNNNNNNNNINNNNNNNININTKRRKSMDPSLDS.

The Extracellular portion of the chain corresponds to 1-735; it reads MRLFFKFFYL…TIETSNIAKT (735 aa). N-linked (GlcNAc...) asparagine glycans are attached at residues asparagine 35, asparagine 44, asparagine 55, asparagine 177, asparagine 258, asparagine 275, asparagine 397, asparagine 402, asparagine 462, asparagine 526, asparagine 527, asparagine 557, asparagine 562, and asparagine 684. Residues 736–756 form a helical membrane-spanning segment; that stretch reads VMIITTSILVLLILLCFGITI. Residues 757 to 768 are Cytoplasmic-facing; it reads AYSKEKVINFGN. The helical transmembrane segment at 769-789 threads the bilayer; that stretch reads IVFLILMLFSCLFLCIIIYVS. At 790-796 the chain is on the extracellular side; that stretch reads IEPTNFS. A glycan (N-linked (GlcNAc...) asparagine) is linked at asparagine 794. A helical membrane pass occupies residues 797 to 817; that stretch reads CQFSAIVFPIGIGILFTLTLL. Residues 818–843 lie on the Cytoplasmic side of the membrane; it reads KQYKIYKLFKYSDFLKINTDNLKMVK. A helical transmembrane segment spans residues 844-864; it reads YAGLIMVPVFLLVLIGVIVYP. Residues 865–888 are Extracellular-facing; that stretch reads SKPTFILDLHTKTATKYCISRKYY. Residues 889–909 traverse the membrane as a helical segment; the sequence is VFSIVIVVYEVIILLTSCFIA. At 910-925 the chain is on the cytoplasmic side; that stretch reads MKSKRYHSTPGTFYES. The helical transmembrane segment at 926 to 946 threads the bilayer; sequence LFNSILIYNYTLVFIVLIPLF. Residues 947 to 955 lie on the Extracellular side of the membrane; sequence YTLQNNPTT. Residues 956–976 traverse the membrane as a helical segment; it reads IYLIYSIGSSILVFATLSIIF. Residues 977–1095 are Cytoplasmic-facing; sequence IPKINFLFRR…SPSSQSIDFL (119 aa). Positions 1074–1105 are enriched in polar residues; sequence IYPNQIPKQTTNSPSSQSIDFLNNPTIPKNKS. The interval 1074-1187 is disordered; that stretch reads IYPNQIPKQT…RKSMDPSLDS (114 aa). Residues 1114–1124 are compositionally biased toward basic residues; the sequence is KKPKKKLKSKI. A compositionally biased stretch (low complexity) spans 1125–1174; the sequence is ISKSANSSPNINNNTINNNNNNNNNNNNNNNNNNNNNNINNNNNNNININ.

The protein belongs to the G-protein coupled receptor 3 family. GABA-B receptor subfamily.

It is found in the membrane. The chain is Metabotropic glutamate receptor-like protein Q (grlQ) from Dictyostelium discoideum (Social amoeba).